Reading from the N-terminus, the 185-residue chain is Putative manganese efflux pump MntP (185 aa).

A run of 6 helical transmembrane segments spans residues 4-24 (LLLS…SVSL), 43-63 (IFFG…GVPI), 67-87 (IDPF…GKMI), 107-127 (LLLA…FALI), 131-151 (VLLP…FGVL), and 165-185 (QILG…EYCL).

It belongs to the MntP (TC 9.B.29) family.

The protein localises to the cell membrane. In terms of biological role, probably functions as a manganese efflux pump. This chain is Putative manganese efflux pump MntP, found in Methanocorpusculum labreanum (strain ATCC 43576 / DSM 4855 / Z).